A 374-amino-acid chain; its full sequence is Probable dual-specificity RNA methyltransferase RlmN 3 (374 aa).

The active-site Proton acceptor is glutamate 96. Residues 110 to 350 (DHSRKTICIS…VTLRREKGHD (241 aa)) enclose the Radical SAM core domain. Cysteine 117 and cysteine 355 are joined by a disulfide. Positions 124, 128, and 131 each coordinate [4Fe-4S] cluster. S-adenosyl-L-methionine is bound by residues 181–182 (GE), serine 213, 236–238 (SLH), and asparagine 312. Residue cysteine 355 is the S-methylcysteine intermediate of the active site.

This sequence belongs to the radical SAM superfamily. RlmN family. It depends on [4Fe-4S] cluster as a cofactor.

Its subcellular location is the cytoplasm. The enzyme catalyses adenosine(2503) in 23S rRNA + 2 reduced [2Fe-2S]-[ferredoxin] + 2 S-adenosyl-L-methionine = 2-methyladenosine(2503) in 23S rRNA + 5'-deoxyadenosine + L-methionine + 2 oxidized [2Fe-2S]-[ferredoxin] + S-adenosyl-L-homocysteine. The catalysed reaction is adenosine(37) in tRNA + 2 reduced [2Fe-2S]-[ferredoxin] + 2 S-adenosyl-L-methionine = 2-methyladenosine(37) in tRNA + 5'-deoxyadenosine + L-methionine + 2 oxidized [2Fe-2S]-[ferredoxin] + S-adenosyl-L-homocysteine. Specifically methylates position 2 of adenine 2503 in 23S rRNA and position 2 of adenine 37 in tRNAs. The chain is Probable dual-specificity RNA methyltransferase RlmN 3 from Opitutus terrae (strain DSM 11246 / JCM 15787 / PB90-1).